A 570-amino-acid polypeptide reads, in one-letter code: Sulfite reductase [NADPH] hemoprotein beta-component (570 aa).

4 residues coordinate [4Fe-4S] cluster: cysteine 434, cysteine 440, cysteine 479, and cysteine 483. Cysteine 483 serves as a coordination point for siroheme.

This sequence belongs to the nitrite and sulfite reductase 4Fe-4S domain family. Alpha(8)-beta(8). The alpha component is a flavoprotein, the beta component is a hemoprotein. Siroheme serves as cofactor. It depends on [4Fe-4S] cluster as a cofactor.

The enzyme catalyses hydrogen sulfide + 3 NADP(+) + 3 H2O = sulfite + 3 NADPH + 4 H(+). It functions in the pathway sulfur metabolism; hydrogen sulfide biosynthesis; hydrogen sulfide from sulfite (NADPH route): step 1/1. Component of the sulfite reductase complex that catalyzes the 6-electron reduction of sulfite to sulfide. This is one of several activities required for the biosynthesis of L-cysteine from sulfate. The protein is Sulfite reductase [NADPH] hemoprotein beta-component of Escherichia coli O9:H4 (strain HS).